Consider the following 433-residue polypeptide: tRNA-queuosine alpha-mannosyltransferase (433 aa).

A disordered region spans residues 194-244; it reads PAAKSHIQTSSPSSYPDVEPPEKMLNVAGTNQSHEPTSVTPHQETASPLCG. Positions 221 to 239 are enriched in polar residues; sequence AGTNQSHEPTSVTPHQETA.

Belongs to the glycosyltransferase group 1 family. Glycosyltransferase 4 subfamily.

It is found in the cytoplasm. It localises to the nucleus. The enzyme catalyses queuosine(34) in tRNA(Asp) + GDP-alpha-D-mannose = O-4''-alpha-D-mannosylqueuosine(34) in tRNA(Asp) + GDP + H(+). Its function is as follows. Glycosyltransferase that specifically catalyzes mannosylation of cytoplasmic tRNA(Asp) modified with queuosine at position 34 (queuosine(34)). Mannosylates the cyclopentene moiety of queuosine(34) in tRNA(Asp) to form mannosyl-queuosine(34). Mannosylation of queuosine(34) in tRNA(Asp) is required to slow-down elongation at cognate codons, GAC and GAU, thereby regulating protein translation. The protein is tRNA-queuosine alpha-mannosyltransferase (gtdc1) of Danio rerio (Zebrafish).